The primary structure comprises 397 residues: uncharacterized protein (397 aa).

Residues Cys-47, Cys-53, Cys-56, and Cys-131 each contribute to the [4Fe-4S] cluster site. The S-adenosyl-L-methionine site is built by Gln-235, Phe-262, Glu-282, and Asp-328. The active-site Nucleophile is the Cys-354.

Belongs to the class I-like SAM-binding methyltransferase superfamily. RNA M5U methyltransferase family.

This is an uncharacterized protein from Zymomonas mobilis subsp. mobilis (strain ATCC 31821 / ZM4 / CP4).